The following is a 449-amino-acid chain: Elongation factor 1-alpha C (449 aa).

Residues 5–234 enclose the tr-type G domain; the sequence is KQHVSIVVIG…DACDPPKRPV (230 aa). Positions 14 to 21 are G1; it reads GHVDSGKS. Position 14–21 (14–21) interacts with GTP; it reads GHVDSGKS. Lysine 55 carries the N6,N6-dimethyllysine modification. The segment at 70-74 is G2; the sequence is GITID. Lysine 79 carries the post-translational modification N6,N6,N6-trimethyllysine. The G3 stretch occupies residues 91 to 94; it reads DAPG. GTP-binding positions include 91–95 and 153–156; these read DAPGH and NKMD. Positions 153–156 are G4; sequence NKMD. Residue lysine 187 is modified to N6,N6,N6-trimethyllysine. A G5 region spans residues 194–196; the sequence is SGW. Position 265 is an N6-methyllysine (lysine 265). Residues lysine 310 and lysine 400 each carry the N6,N6,N6-trimethyllysine modification.

Belongs to the TRAFAC class translation factor GTPase superfamily. Classic translation factor GTPase family. EF-Tu/EF-1A subfamily.

It is found in the cytoplasm. Functionally, this protein promotes the GTP-dependent binding of aminoacyl-tRNA to the A-site of ribosomes during protein biosynthesis. The polypeptide is Elongation factor 1-alpha C (TEF-C) (Porphyra purpurea (Red seaweed)).